The following is a 157-amino-acid chain: 3-hydroxyacyl-[acyl-carrier-protein] dehydratase FabZ (157 aa).

Histidine 58 is a catalytic residue.

This sequence belongs to the thioester dehydratase family. FabZ subfamily.

It localises to the cytoplasm. The catalysed reaction is a (3R)-hydroxyacyl-[ACP] = a (2E)-enoyl-[ACP] + H2O. In terms of biological role, involved in unsaturated fatty acids biosynthesis. Catalyzes the dehydration of short chain beta-hydroxyacyl-ACPs and long chain saturated and unsaturated beta-hydroxyacyl-ACPs. This chain is 3-hydroxyacyl-[acyl-carrier-protein] dehydratase FabZ, found in Brucella melitensis biotype 2 (strain ATCC 23457).